Consider the following 94-residue polypeptide: RING finger protein Z (94 aa).

A compositionally biased stretch (polar residues) spans 1–19; it reads MGNCNGASKSNQPDSSRVT. Residues 1–20 form a disordered region; that stretch reads MGNCNGASKSNQPDSSRVTQ. A lipid anchor (N-myristoyl glycine; by host) is attached at Gly-2. The RING-type; atypical zinc-finger motif lies at 39 to 75; that stretch reads CKCCWFADTNLITCNDHYLCLRCHQVMLRNSDLCNIC. Positions 89-92 match the PTAP/PSAP motif motif; it reads PTAP.

This sequence belongs to the arenaviridae Z protein family. In terms of assembly, interacts with protein NP; this interaction probably directs the encapsidated genome to budding sites. Interacts (via RING domain) with polymerase L; this interaction inhibits viral transcription and replication, Z partially blocks the product exit tunnel for the releasing nascent RNA product. Interacts with the glycoprotein complex; this interaction plays a role in virion budding. Interacts with host eIF4E; this interaction results in eIF4E reduced affinity for its substrate, the 5'-m7 G cap structure. Interacts (via late-budding domain) with host TSG101; this interaction is essential for budding and release of viral particles. Interacts with host RPLP0; this interaction may serve to load ribosome-like particles inside the virion. Interacts with host PML; this interaction induces PML bodies redistribution in the cytoplasm upon viral infection. Myristoylation is required for the role of RING finger protein Z in assembly and budding.

The protein resides in the virion. Its subcellular location is the host cytoplasm. The protein localises to the host perinuclear region. It is found in the host cell membrane. In terms of biological role, plays a crucial role in virion assembly and budding. Expressed late in the virus life cycle, it acts as an inhibitor of viral transcription and RNA synthesis by interacting with the viral polymerase L. Presumably recruits the NP encapsidated genome to cellular membranes at budding sites via direct interaction with NP. Plays critical roles in the final steps of viral release by interacting with host TSG101, a member of the vacuolar protein-sorting pathway and using other cellular host proteins involved in vesicle formation pathway. The budding of the virus progeny occurs after association of protein Z with the viral glycoprotein complex SSP-GP1-GP2 at the cell periphery, step that requires myristoylation of protein Z. Also selectively represses protein production by associating with host eIF4E. In cell-based minigenome assay, has an inhibitory effect on the ribonucleoprotein machinery (vRNP), which is responsible for the replication and transcription of the viral genome. The chain is RING finger protein Z from Akodon azarae (Azara's grass mouse).